A 268-amino-acid polypeptide reads, in one-letter code: Helix-loop-helix protein 6 (268 aa).

The segment covering 117–130 has biased composition (low complexity); that stretch reads QSQVQPQLPTQSQP. The interval 117-140 is disordered; that stretch reads QSQVQPQLPTQSQPKPSSKASLDT. Over residues 131–140 the composition is skewed to polar residues; it reads KPSSKASLDT. The region spanning 173–225 is the bHLH domain; that stretch reads SSVWKRNERERCRVRNVNDGYERLRKHLPVHFDEKRISKVDTLRLAIRYIKHL.

In terms of tissue distribution, expressed in the gland cells of the pharynx and weakly in the pharyngeal neuron.

The protein resides in the nucleus. Transcription factor that regulates the development of the g2 pharyngeal gland cells and pharyngeal gland function and thereby is required for feeding. Required for the expression of a number of genes in the pharyngeal gland, possibly by binding to the E box motif (5'-CANNTG-3') in the promoter region of these genes. Positively regulates the expression of genes encoding mucin-like proteins, which lubricate the pharyngeal tract to ensure efficient passage of the bacterial food source. Exhibits pharyngeal gland-specific positive autoregulation activity. The sequence is that of Helix-loop-helix protein 6 (hlh-6) from Caenorhabditis elegans.